A 60-amino-acid polypeptide reads, in one-letter code: Toxin FS-2 (60 aa).

4 disulfide bridges follow: Cys-3/Cys-22, Cys-17/Cys-39, Cys-41/Cys-52, and Cys-53/Cys-58. Positions 41–48 (CPTAMWPY) are important for binding to L-type calcium channels.

The protein belongs to the three-finger toxin family. Short-chain subfamily. L-type calcium blocker sub-subfamily. In terms of tissue distribution, expressed by the venom gland.

The protein localises to the secreted. Functionally, specific blocker of the voltage-dependent L-type calcium channel (Cav1/CACNA1). Inhibits cardiac contractions. This Dendroaspis polylepis polylepis (Black mamba) protein is Toxin FS-2.